The chain runs to 317 residues: Protein-methionine-sulfoxide reductase catalytic subunit MsrP (317 aa).

Residues 1–40 (MKKLTSNDVTPEEIFYQRRKIIKAFGLSAVATALPTFSFA) constitute a signal peptide (tat-type signal). Mo-molybdopterin-binding positions include N71, 74 to 75 (YE), C129, T164, N216, R221, and 232 to 234 (SIK).

Belongs to the MsrP family. As to quaternary structure, heterodimer of a catalytic subunit (MsrP) and a heme-binding subunit (MsrQ). Mo-molybdopterin is required as a cofactor. Predicted to be exported by the Tat system. The position of the signal peptide cleavage has not been experimentally proven.

Its subcellular location is the periplasm. The enzyme catalyses L-methionyl-[protein] + a quinone + H2O = L-methionyl-(S)-S-oxide-[protein] + a quinol. It carries out the reaction L-methionyl-[protein] + a quinone + H2O = L-methionyl-(R)-S-oxide-[protein] + a quinol. Part of the MsrPQ system that repairs oxidized periplasmic proteins containing methionine sulfoxide residues (Met-O), using respiratory chain electrons. Thus protects these proteins from oxidative-stress damage caused by reactive species of oxygen and chlorine generated by the host defense mechanisms. MsrPQ is essential for the maintenance of envelope integrity under bleach stress, rescuing a wide series of structurally unrelated periplasmic proteins from methionine oxidation. The catalytic subunit MsrP is non-stereospecific, being able to reduce both (R-) and (S-) diastereoisomers of methionine sulfoxide. This Histophilus somni (strain 2336) (Haemophilus somnus) protein is Protein-methionine-sulfoxide reductase catalytic subunit MsrP.